The following is a 510-amino-acid chain: Protein phosphatase 1H (510 aa).

The region spanning 73 to 503 (STGYAEVINA…DDISVYVIPL (431 aa)) is the PPM-type phosphatase domain. 2 disordered regions span residues 105–128 (VQST…EGLQ) and 188–225 (LGEE…PTRF).

It belongs to the PP2C family.

It localises to the nucleus. The protein localises to the cytoplasm. The catalysed reaction is O-phospho-L-seryl-[protein] + H2O = L-seryl-[protein] + phosphate. It catalyses the reaction O-phospho-L-threonyl-[protein] + H2O = L-threonyl-[protein] + phosphate. This Xenopus tropicalis (Western clawed frog) protein is Protein phosphatase 1H (ppm1h).